A 336-amino-acid polypeptide reads, in one-letter code: NEDD4 family-interacting protein 2 (336 aa).

Disordered regions lie at residues 1–24 and 37–156; these read MARRRSQRVCASGPSMLNSARGAP and SAAA…SITV. The Cytoplasmic segment spans residues 1–231; that stretch reads MARRRSQRVC…ADQLRVGNDG (231 aa). Low complexity predominate over residues 37-48; sequence SAAAAGATGSEE. Positions 78-99 are enriched in basic and acidic residues; it reads EHGEDSLSRKPDPEPGRMDHHQ. The interaction with NEDD4 stretch occupies residues 148–151; it reads PPPY. Positions 148–151 match the PPxY motif 1 motif; sequence PPPY. Phosphotyrosine; by SRC occurs at positions 151, 167, 171, and 177. Short sequence motifs (PPxY motif) lie at residues 174-177 and 184-186; these read PPPY and PTY. Residues 232–252 traverse the membrane as a helical segment; that stretch reads IFMLAFFMAFIFNWLGFCLSF. Topologically, residues 253-257 are extracellular; sequence CITNT. A helical membrane pass occupies residues 258–278; that stretch reads IAGRYGAICGFGLSLIKWILI. Over 279 to 287 the chain is Cytoplasmic; that stretch reads VRFSDYFTG. The helical transmembrane segment at 288 to 308 threads the bilayer; that stretch reads YFNGQYWLWWIFLVLGLLLFF. Over 309–336 the chain is Extracellular; that stretch reads RGFVNYLKVRNMSESMAAAHRTRYFFLL.

As to quaternary structure, forms heterodimers with NDFIP1. Interacts with HECT domain-containing E3 ubiquitin-protein ligases, including NEDD4. Interacts with NEDD4L. Interacts with PTEN. When phosphorylated at Tyr-167, interacts with SRC and LYN SH2 domain. May thus act as a scaffold that recruits SRC to NDFIP1, enhancing NDFIP1 phosphorylation. Interacts with SLC11A2/DMT1. May interact with phosphorylated EGFR. Interacts with KCNH2. In terms of processing, ubiquitinated by NEDD4 and ITCH. Also ubiquitinated by NEDD4L. Ubiquitination by NEDD4 or NEDD4L does not affect turnover. Post-translationally, undergoes transient tyrosine-phosphorylation following EGF stimulation, most probably catalyzed by SRC. Phosphorylation on Tyr-151, Tyr-171 and Tyr-177 are dependent on the phosphorylation on Tyr-167. Also phosphorylated by LYN and FYN. Expressed in brain, lung, heart, skeletal muscle, kidney, liver and placenta.

The protein resides in the endosome membrane. The protein localises to the golgi apparatus membrane. It localises to the endosome. Its subcellular location is the multivesicular body membrane. Functionally, activates HECT domain-containing E3 ubiquitin-protein ligases, including ITCH, NEDD4, NEDD4L, SMURF2, WWP1 and WWP2, and consequently modulates the stability of their targets. As a result, may control many cellular processes. Recruits ITCH, NEDD4 and SMURF2 to endosomal membranes. Negatively regulates KCNH2 potassium channel activity by decreasing its cell-surface expression and interfering with channel maturation through recruitment of NEDD4L to the Golgi apparatus and multivesicular body where it mediates KCNH2 degradation. May modulate EGFR signaling. Together with NDFIP1, limits the cytokine signaling and expansion of effector Th2 T-cells by promoting degradation of JAK1, probably by ITCH- and NEDD4L-mediated ubiquitination. In Homo sapiens (Human), this protein is NEDD4 family-interacting protein 2 (NDFIP2).